The sequence spans 970 residues: Testis anion transporter 1 (970 aa).

Residues 1 to 95 (MAQLERSAIS…YRLKDWLLGD (95 aa)) are Cytoplasmic-facing. The helical transmembrane segment at 96-116 (LLAGISVGLVQVPQGLTLSLL) threads the bilayer. Residues 117–119 (ARQ) lie on the Extracellular side of the membrane. A helical transmembrane segment spans residues 120–140 (LIPPLNIAYAAFCSSVIYVIF). At 141–146 (GSCHQM) the chain is on the cytoplasmic side. Residues 147-167 (SIGSFFLVSALLINVLKVSPF) form a helical membrane-spanning segment. Over 168 to 202 (NNGQLVMGSFVKNEFSAPSYLMGYNKSLSVVATTT) the chain is Extracellular. N-linked (GlcNAc...) asparagine glycosylation occurs at asparagine 192. A helical membrane pass occupies residues 203–223 (FLTGIIQLIMGVLGLGFIATY). Residues 224–232 (LPESAMSAY) are Cytoplasmic-facing. The helical transmembrane segment at 233 to 253 (LAAVALHIMLSQLTFIFGIMI) threads the bilayer. Residues 254-270 (SFHAGPISFFYDIINYC) are Extracellular-facing. Residues 271–291 (VALPKANSTSILVFLTVVVAL) form a helical membrane-spanning segment. The Cytoplasmic portion of the chain corresponds to 292 to 307 (RINKCIRISFNQYPIE). Residues 308–328 (FPMELFLIIGFTVIANKISMA) traverse the membrane as a helical segment. The Extracellular portion of the chain corresponds to 329–355 (TETSQTLIDMIPYSFLLPVTPDFSLLP). The chain crosses the membrane as a helical span at residues 356–376 (KIILQAFSLSLVSSFLLIFLG). The Cytoplasmic segment spans residues 377–392 (KKIASLHNYSVNSNQD). Residues 393–413 (LIAIGLCNVVSSFFRSCVFTG) form a helical membrane-spanning segment. Residues 414–429 (AIARTIIQDKSGGRQQ) lie on the Extracellular side of the membrane. The helical transmembrane segment at 430-450 (FASLVGAGVMLLLMVKMGHFF) threads the bilayer. The Cytoplasmic portion of the chain corresponds to 451–452 (YT). Residues 453 to 473 (LPNAVLAGIILSNVIPYLETI) form a helical membrane-spanning segment. Over 474-497 (SNLPSLWRQDQYDCALWMMTFSSS) the chain is Extracellular. A helical membrane pass occupies residues 498–518 (IFLGLDIGLIISVVSAFFITT). Over 519-970 (VRSHRAKILL…SPEGNSNEDV (452 aa)) the chain is Cytoplasmic. An STAS domain is found at 543-795 (DYREIITIPG…LSVHDAVLFA (253 aa)). The tract at residues 664-970 (TVSSVSQKNQ…SPEGNSNEDV (307 aa)) is interaction with RACGAP1. Residues 858–868 (SELDLELESEQ) are compositionally biased toward acidic residues. The tract at residues 858 to 970 (SELDLELESE…SPEGNSNEDV (113 aa)) is disordered. The span at 877 to 898 (DLDRELEPEMEPKAETETKTQT) shows a compositional bias: basic and acidic residues. Over residues 938-948 (STQSQTQTRTW) the composition is skewed to low complexity.

The protein belongs to the SLC26A/SulP transporter (TC 2.A.53) family. In terms of assembly, interacts with RACGAP1. Interacts with CFTR; stimulates anion transport activity of CFTR. In terms of processing, N-glycosylated. In terms of tissue distribution, expression observed exclusively in testis, restricted to the meiotic phase of the germ cell. Abundant expression located in the seminiferous tubules, concentrated on the luminal side of the tubuli harboring the spermatocytes and spermatids.

Its subcellular location is the membrane. The catalysed reaction is sulfate(out) + chloride(in) = sulfate(in) + chloride(out). It catalyses the reaction oxalate(in) + chloride(out) = oxalate(out) + chloride(in). Its activity is regulated as follows. Activity is inhibited by 4,4'-Di-isothiocyanatostilbene-2,2'-disulfonic acid (DIDS - an inhibitor of several anion channels and transporters) and gluconate. In terms of biological role, antiporter that mediates the exchange of sulfate and oxalate against chloride ions across a membrane. Stimulates anion transport activity of CFTR. May cooperate with CFTR in the regulation of chloride and bicarbonate ions fluxes required for activation of the ADCY10/PKA pathway during sperm motility and sperm capacitation. May play a role in sperm tail differentiation and motility and hence male fertility. The protein is Testis anion transporter 1 of Homo sapiens (Human).